Reading from the N-terminus, the 460-residue chain is ATP synthase subunit beta (460 aa).

148 to 155 (GGAGVGKT) is a binding site for ATP.

It belongs to the ATPase alpha/beta chains family. As to quaternary structure, F-type ATPases have 2 components, CF(1) - the catalytic core - and CF(0) - the membrane proton channel. CF(1) has five subunits: alpha(3), beta(3), gamma(1), delta(1), epsilon(1). CF(0) has three main subunits: a(1), b(2) and c(9-12). The alpha and beta chains form an alternating ring which encloses part of the gamma chain. CF(1) is attached to CF(0) by a central stalk formed by the gamma and epsilon chains, while a peripheral stalk is formed by the delta and b chains.

The protein localises to the cell inner membrane. The catalysed reaction is ATP + H2O + 4 H(+)(in) = ADP + phosphate + 5 H(+)(out). Functionally, produces ATP from ADP in the presence of a proton gradient across the membrane. The catalytic sites are hosted primarily by the beta subunits. This chain is ATP synthase subunit beta, found in Alcanivorax borkumensis (strain ATCC 700651 / DSM 11573 / NCIMB 13689 / SK2).